Consider the following 297-residue polypeptide: Acetaldehyde dehydrogenase (297 aa).

Position 15–18 (15–18 (SGSI)) interacts with NAD(+). The active-site Acyl-thioester intermediate is the Cys130. NAD(+) is bound by residues 162 to 170 (SAGIATREN) and Asn272.

This sequence belongs to the acetaldehyde dehydrogenase family.

The enzyme catalyses acetaldehyde + NAD(+) + CoA = acetyl-CoA + NADH + H(+). This Burkholderia pseudomallei (strain 1106a) protein is Acetaldehyde dehydrogenase.